Consider the following 306-residue polypeptide: Serine/threonine-protein phosphatase 2A catalytic subunit A (306 aa).

4 residues coordinate Mn(2+): aspartate 54, histidine 56, aspartate 82, and asparagine 114. Histidine 115 serves as the catalytic Proton donor. Mn(2+) contacts are provided by histidine 164 and histidine 238. Position 306 is a leucine methyl ester (leucine 306).

Belongs to the PPP phosphatase family. PP-2A subfamily. In terms of assembly, PP2A consists of a trimeric holoenzyme, composed of a 37 kDa catalytic subunit (C subunit) and a 65 kDa constant regulatory subunit (A subunit), that associates with a variety of regulatory subunits (B subunit) such as phr2AB (B55) and psrA (B56 homolog). The trimer may partially dissociates into a core 'AC' dimer equally active compared to the trimer. It depends on Mn(2+) as a cofactor. Reversibly methyl esterified on Leu-306 by leucine carboxyl methyltransferase 1 (LCMT) and protein phosphatase methylesterase 1 (PPME1). Carboxyl methylation influences the affinity of the catalytic subunit for the different regulatory subunits, thereby modulating the PP2A holoenzyme's substrate specificity, enzyme activity and cellular localization.

The protein localises to the cytoplasm. The protein resides in the cytosol. It localises to the nucleus speckle. It catalyses the reaction O-phospho-L-seryl-[protein] + H2O = L-seryl-[protein] + phosphate. It carries out the reaction O-phospho-L-threonyl-[protein] + H2O = L-threonyl-[protein] + phosphate. Plays a role in activating the myosin contractile function. Dephosphorylates threonine at 'Thr-1823', 'Thr-1833' and 'Thr-2029' in the C-terminal tail region of myosin II heavy chain (mhcA). Drives the assembly of dephosphorylated myosin II filaments to allow myosin recruitment into the cytoskeleton. In Dictyostelium discoideum (Social amoeba), this protein is Serine/threonine-protein phosphatase 2A catalytic subunit A (pho2a).